The following is a 1131-amino-acid chain: RNA2 polyprotein (1131 aa).

A disordered region spans residues 213–236 (ALRTHPGGPALPPLPPPPPIQKPP). The segment covering 221 to 234 (PALPPLPPPPPIQK) has biased composition (pro residues).

The protein belongs to the nepoviruses RNA2 polyprotein family. In terms of processing, specific enzymatic cleavages in vivo by the P1 encoded 3C-like protease yield mature proteins.

The protein resides in the host cell junction. It is found in the host plasmodesma. The protein localises to the virion. Functionally, implicated in RNA2 replication. Could also be required for nematode transmission of the virus. Transports viral genome to neighboring plant cells directly through plasmosdesmata, without any budding. The movement protein allows efficient cell to cell propagation, by bypassing the host cell wall barrier. Acts by forming a tubular structure at the host plasmodesmata, enlarging it enough to allow free passage of virion capsids. The polypeptide is RNA2 polyprotein (Vitis vinifera (Grape)).